Consider the following 333-residue polypeptide: Adenosine deaminase (333 aa).

2 residues coordinate Zn(2+): His12 and His14. The substrate site is built by His14, Asp16, and Gly170. Residue His197 coordinates Zn(2+). Glu200 (proton donor) is an active-site residue. Asp278 serves as a coordination point for Zn(2+). Residue Asp279 participates in substrate binding.

Belongs to the metallo-dependent hydrolases superfamily. Adenosine and AMP deaminases family. Adenosine deaminase subfamily. Requires Zn(2+) as cofactor.

It catalyses the reaction adenosine + H2O + H(+) = inosine + NH4(+). The enzyme catalyses 2'-deoxyadenosine + H2O + H(+) = 2'-deoxyinosine + NH4(+). Functionally, catalyzes the hydrolytic deamination of adenosine and 2-deoxyadenosine. The sequence is that of Adenosine deaminase from Photorhabdus laumondii subsp. laumondii (strain DSM 15139 / CIP 105565 / TT01) (Photorhabdus luminescens subsp. laumondii).